Consider the following 176-residue polypeptide: Retinol-binding protein 4-B (176 aa).

At Ser-1 the chain carries N-acetylserine. Intrachain disulfides connect Cys-3–Cys-159, Cys-69–Cys-173, and Cys-119–Cys-128. Residue Gln-97 coordinates substrate.

This sequence belongs to the calycin superfamily. Lipocalin family.

It localises to the secreted. RBP delivers retinol from the liver stores to the peripheral tissues. In plasma, the RBP-retinol complex interacts with transthyretin, this prevents its loss by filtration through the kidney glomeruli. The protein is Retinol-binding protein 4-B (rbp4b) of Oncorhynchus mykiss (Rainbow trout).